The following is a 149-amino-acid chain: Small ribosomal subunit protein uS9 (149 aa).

This sequence belongs to the universal ribosomal protein uS9 family.

Its subcellular location is the cytoplasm. The chain is Small ribosomal subunit protein uS9 (RPS16A) from Oryza sativa subsp. indica (Rice).